The following is a 591-amino-acid chain: V-type ATP synthase alpha chain (591 aa).

232–239 is an ATP binding site; that stretch reads GPFGAGKT.

Belongs to the ATPase alpha/beta chains family.

The enzyme catalyses ATP + H2O + 4 H(+)(in) = ADP + phosphate + 5 H(+)(out). Its function is as follows. Produces ATP from ADP in the presence of a proton gradient across the membrane. The V-type alpha chain is a catalytic subunit. This is V-type ATP synthase alpha chain from Nitrosococcus oceani (strain ATCC 19707 / BCRC 17464 / JCM 30415 / NCIMB 11848 / C-107).